Reading from the N-terminus, the 874-residue chain is Alanine--tRNA ligase (874 aa).

Positions 562, 566, 664, and 668 each coordinate Zn(2+).

The protein belongs to the class-II aminoacyl-tRNA synthetase family. Requires Zn(2+) as cofactor.

It localises to the cytoplasm. The enzyme catalyses tRNA(Ala) + L-alanine + ATP = L-alanyl-tRNA(Ala) + AMP + diphosphate. Catalyzes the attachment of alanine to tRNA(Ala) in a two-step reaction: alanine is first activated by ATP to form Ala-AMP and then transferred to the acceptor end of tRNA(Ala). Also edits incorrectly charged Ser-tRNA(Ala) and Gly-tRNA(Ala) via its editing domain. The polypeptide is Alanine--tRNA ligase (Neisseria meningitidis serogroup C (strain 053442)).